An 879-amino-acid chain; its full sequence is Alanine--tRNA ligase (879 aa).

4 residues coordinate Zn(2+): His566, His570, Cys668, and His672.

This sequence belongs to the class-II aminoacyl-tRNA synthetase family. The cofactor is Zn(2+).

The protein localises to the cytoplasm. It catalyses the reaction tRNA(Ala) + L-alanine + ATP = L-alanyl-tRNA(Ala) + AMP + diphosphate. Catalyzes the attachment of alanine to tRNA(Ala) in a two-step reaction: alanine is first activated by ATP to form Ala-AMP and then transferred to the acceptor end of tRNA(Ala). Also edits incorrectly charged Ser-tRNA(Ala) and Gly-tRNA(Ala) via its editing domain. The polypeptide is Alanine--tRNA ligase (Listeria welshimeri serovar 6b (strain ATCC 35897 / DSM 20650 / CCUG 15529 / CIP 8149 / NCTC 11857 / SLCC 5334 / V8)).